A 308-amino-acid chain; its full sequence is Protein translocase subunit SecF (308 aa).

The next 6 helical transmembrane spans lie at 23 to 42 (VSYS…IGIY), 140 to 160 (IEAG…YIGV), 164 to 184 (WYFG…ALGF), 194 to 214 (LSTI…SVVI), 246 to 266 (ILTV…GGKA), and 272 to 292 (VLVF…SAPI).

This sequence belongs to the SecD/SecF family. SecF subfamily. In terms of assembly, forms a complex with SecD. Part of the essential Sec protein translocation apparatus which comprises SecA, SecYEG and auxiliary proteins SecDF-YajC and YidC.

It localises to the cell inner membrane. Its function is as follows. Part of the Sec protein translocase complex. Interacts with the SecYEG preprotein conducting channel. SecDF uses the proton motive force (PMF) to complete protein translocation after the ATP-dependent function of SecA. This Rickettsia typhi (strain ATCC VR-144 / Wilmington) protein is Protein translocase subunit SecF.